Reading from the N-terminus, the 1548-residue chain is MVDNGHVTIAMADLGTVVEIAQVRCQQEAQRKFAEQLDELWGGEPAYTPTVEDQASWFQQLYYGWIGDYIYKAAAGNITEADLPPPTRSTRTYHIGRKLSRQAHADIDASRRWQGYIGCEVVYKSEAEAKGVLRWVGHLQQSDYPRSLVAGVEWRMPPRHRRLAVLGSAAALHNGVVHGERLFWPHEDNYLCSCEPVEQLYVKSKYNLIPPRPPPSPDLLRTLFKVHWYHVWAQILPKLLSDVTALMLPVLLEYFVKYLNADNATWGWGLGLALTIFLTNVIQSCSAHKYDHISIRTAALFETSSMALLFEKCFTVSRRSLQRPDMSVGRIMNMVGNDVDNIGSLNWYVMYFWSAPLQLVLCLLLLIRLVGWLRVPGMAVLFVTLPLQAVISKHVQDVSERMASVVDLRIKRTNELLSGVRIVKFMGWEPVFLARIQDARSRELRCLRDVHVANVFFMFVNDATPTLVIAVVFILYHVSGKVLKPEVVFPTIALLNTMRVSFFMIPIIISSILQCFVSAKRVTAFIECPDTHSQVQDIASIDVPDAAAIFKGASIHTYLPVKLPRCKSRLTAMQRSTLWFRRRGVPETEWYEVDSPDASASSLAVHSTTVHMGSTQTVITDSDGAAGEDEKGEVEEGDREYYQLVSKELLRNVSLTIPKGKLTMVIGSTGSGKSTLLGALMGEYSVESGELWAERSIAYVPQQAWIMNATLRGNILFFDEERAEDLQDVIRCCQLEADLAQFCGGLDTEIGEMGVNLSGGQKARVSLARAVYANRDVYLLDDPLSALDAHVGQRIVQDVILGRLRGKTRVLATHQIHLLPLADYIVVLQHGSIVFAGDFAAFSATALEETLRGELKGSKDVESCSSDVDTESATAETAPYVAKAKGLNAEQETSLAGGEDPLRSDVEAGRLMTTEEKATGKVPWSTYVAYLKSCGGLEAWGCLLATFALTECVTAASSVWLSIWSTGSLMWSADTYLYVYLFIVFLEIFGSPLRFFLCYYLIRIGSRNMHRDLLESIGVARMSFFDTTPVGRVLNRFTKDMSILDNTLNDGYLYLLEYFFSMCSTVIIMVVVQPFVLVAIVPCVYSYYKLMQVYNASNRETRRIKSIAHSPVFTLLEESLQGQRTIATYGKLHLVLQEALGRLDVVYSALYMQNVSNRWLGVRLEFLSCVVTFMVAFIGVIGKMEGASSQNIGLISLSLTMSMTLTETLNWLVRQVAMVEANMNSVERVLHYTQEVEHEHVPEMGELVAQLVRSESGRGANVTETVVIESAGAASSALHPVQAGSLVLEGVQMRYREGLPLVLRGVSFQIAPREKVGIVGRTGSGKSTLLLTFMRMVEVCGGVIHVNGREMSAYGLRDVRRHFSMIPQDPVLFDGTVRQNVDPFLEASSAEVWAALELVGLRERVASESEGIDSRVLEGGSNYSVGQRQLMCMARALLKRGSGFILMDEATANIDPALDRQIQATVMSAFSAYTVITIAHRLHTVAQYDKIIVMDHGVVAEMGSPRELVMNHQSMFHSMVESLGSRGSKDFYELLMGRRIVQPAVLSD.

Residues 1–238 are Cytoplasmic-facing; sequence MVDNGHVTIA…YHVWAQILPK (238 aa). Residues 231–514 enclose the ABC transmembrane type-1 1 domain; that stretch reads VWAQILPKLL…IPIIISSILQ (284 aa). Residues 239–256 traverse the membrane as a helical segment; that stretch reads LLSDVTALMLPVLLEYFV. The N-linked (GlcNAc...) asparagine glycan is linked to Asn263. Transmembrane regions (helical) follow at residues 266–287, 349–367, 375–392, 463–480, and 500–519; these read WGWG…SCSA, VMYF…LLLI, VPGM…AVIS, ATPT…HVSG, and VSFF…FVSA. The Cytoplasmic segment spans residues 520–932; that stretch reads KRVTAFIECP…PWSTYVAYLK (413 aa). An ABC transporter 1 domain is found at 634-855; it reads VEEGDREYYQ…ALEETLRGEL (222 aa). 667 to 674 is an ATP binding site; it reads GSTGSGKS. The next 4 membrane-spanning stretches (helical) occupy residues 933–950, 975–993, 1051–1070, and 1072–1088; these read SCGG…FALT, TYLY…GSPL, GYLY…IIMV, and VQPF…YSYY. An ABC transmembrane type-1 2 domain is found at 940-1221; it reads WGCLLATFAL…LVRQVAMVEA (282 aa). N-linked (GlcNAc...) asparagine glycosylation is found at Asn1095 and Asn1154. Transmembrane regions (helical) follow at residues 1164–1182 and 1186–1205; these read LEFL…GVIG and GASS…SMTL. Residues 1206–1548 lie on the Cytoplasmic side of the membrane; the sequence is TETLNWLVRQ…RIVQPAVLSD (343 aa). The ABC transporter 2 domain occupies 1286-1521; the sequence is LVLEGVQMRY…HQSMFHSMVE (236 aa). 1320–1327 contacts ATP; sequence GRTGSGKS.

This sequence belongs to the ABC transporter superfamily. ABCB family. Multidrug resistance exporter (TC 3.A.1.201) subfamily.

Its subcellular location is the membrane. The enzyme catalyses ATP + H2O + xenobioticSide 1 = ADP + phosphate + xenobioticSide 2.. This chain is Multidrug resistance protein (PGPA), found in Leishmania tarentolae (Sauroleishmania tarentolae).